The chain runs to 356 residues: Naringenin,2-oxoglutarate 3-dioxygenase (356 aa).

The Fe2OG dioxygenase domain occupies 188–292 (CVDMDQKVVV…RLSIATFQNP (105 aa)). Fe cation is bound by residues histidine 215, aspartate 217, and histidine 273. Position 283 (arginine 283) interacts with 2-oxoglutarate.

Belongs to the iron/ascorbate-dependent oxidoreductase family. Requires Fe(2+) as cofactor. The cofactor is L-ascorbate.

The catalysed reaction is a (2S)-flavan-4-one + 2-oxoglutarate + O2 = a (2R,3R)-dihydroflavonol + succinate + CO2. It participates in secondary metabolite biosynthesis; flavonoid biosynthesis. Functionally, catalyzes the 3-beta-hydroxylation of 2S-flavanones to 2R,3R-dihydroflavonols which are intermediates in the biosynthesis of flavonols, anthocyanidins, catechins and proanthocyanidins in plants. In Callistephus chinensis (China aster), this protein is Naringenin,2-oxoglutarate 3-dioxygenase (FHT).